We begin with the raw amino-acid sequence, 118 residues long: Large ribosomal subunit protein bL20 (118 aa).

It belongs to the bacterial ribosomal protein bL20 family.

In terms of biological role, binds directly to 23S ribosomal RNA and is necessary for the in vitro assembly process of the 50S ribosomal subunit. It is not involved in the protein synthesizing functions of that subunit. The protein is Large ribosomal subunit protein bL20 of Tolumonas auensis (strain DSM 9187 / NBRC 110442 / TA 4).